Consider the following 858-residue polypeptide: Conidiophore development regulator abaA (858 aa).

A disordered region spans residues 1–22 (MSSSLYHPRPVLSSQRYTPSPD). Positions 128 to 221 (QKDKGGVWRR…QVVKKFFEDL (94 aa)) form a DNA-binding region, TEA. Basic and acidic residues predominate over residues 500–522 (VEHQRKKEKRTKGDDRKNLDRAG). 2 disordered regions span residues 500–535 (VEHQRKKEKRTKGDDRKNLDRAGSKRKRSEDDGDAA) and 792–858 (TGAG…AGGW). The short motif at 514-521 (DRKNLDRA) is the Nuclear localization signal element. A compositionally biased stretch (polar residues) spans 809-822 (SSDQTALWTQSQWA).

Belongs to the TEC1 family.

The protein resides in the nucleus. Functionally, abaA and wetA are pivotal regulators of conidiophore development and conidium maturation. They act individually and together to regulate their own expression and that of numerous other sporulation-specific genes. Binds to the sequence 5'-CATTCY-3', where Y is a pyrimidine, making both major- and minor-groove contacts. Plays a pivotal role in conidiation by regulating cell cycle pathways and other conidiation-related genes. In Gibberella zeae (strain ATCC MYA-4620 / CBS 123657 / FGSC 9075 / NRRL 31084 / PH-1) (Wheat head blight fungus), this protein is Conidiophore development regulator abaA.